The following is a 456-amino-acid chain: Chromosomal replication initiator protein DnaA (456 aa).

The domain I, interacts with DnaA modulators stretch occupies residues 1–73 (MEIYLDNLWD…ADVVHDILGY (73 aa)). The domain II stretch occupies residues 73 to 117 (YPVEIYLTTFLVEDSRKNDSGLIWSEHKSVNILGENLSIPKPLPA). The interval 118 to 334 (NLNAKYMFSR…GALTRVVTYI (217 aa)) is domain III, AAA+ region. ATP is bound by residues Gly-162, Gly-164, Lys-165, and Thr-166. The tract at residues 335-456 (SISGLPMTVE…SDRINFSSRH (122 aa)) is domain IV, binds dsDNA.

The protein belongs to the DnaA family. In terms of assembly, oligomerizes as a right-handed, spiral filament on DNA at oriC.

The protein resides in the cytoplasm. Plays an essential role in the initiation and regulation of chromosomal replication. ATP-DnaA binds to the origin of replication (oriC) to initiate formation of the DNA replication initiation complex once per cell cycle. Binds the DnaA box (a 9 base pair repeat at the origin) and separates the double-stranded (ds)DNA. Forms a right-handed helical filament on oriC DNA; dsDNA binds to the exterior of the filament while single-stranded (ss)DNA is stabiized in the filament's interior. The ATP-DnaA-oriC complex binds and stabilizes one strand of the AT-rich DNA unwinding element (DUE), permitting loading of DNA polymerase. After initiation quickly degrades to an ADP-DnaA complex that is not apt for DNA replication. Binds acidic phospholipids. This chain is Chromosomal replication initiator protein DnaA, found in Trichodesmium erythraeum (strain IMS101).